Reading from the N-terminus, the 159-residue chain is 3-hydroxyacyl-[acyl-carrier-protein] dehydratase FabZ (159 aa).

Histidine 58 is an active-site residue.

Belongs to the thioester dehydratase family. FabZ subfamily.

The protein localises to the cytoplasm. The enzyme catalyses a (3R)-hydroxyacyl-[ACP] = a (2E)-enoyl-[ACP] + H2O. Functionally, involved in unsaturated fatty acids biosynthesis. Catalyzes the dehydration of short chain beta-hydroxyacyl-ACPs and long chain saturated and unsaturated beta-hydroxyacyl-ACPs. This Helicobacter pylori (strain ATCC 700392 / 26695) (Campylobacter pylori) protein is 3-hydroxyacyl-[acyl-carrier-protein] dehydratase FabZ.